Here is a 479-residue protein sequence, read N- to C-terminus: Ribosomal RNA small subunit methyltransferase F (479 aa).

S-adenosyl-L-methionine-binding positions include 125–131, Glu149, Asp176, and Asp194; that span reads AAAPGSK. Residue Cys247 is the Nucleophile of the active site.

This sequence belongs to the class I-like SAM-binding methyltransferase superfamily. RsmB/NOP family.

It localises to the cytoplasm. It catalyses the reaction cytidine(1407) in 16S rRNA + S-adenosyl-L-methionine = 5-methylcytidine(1407) in 16S rRNA + S-adenosyl-L-homocysteine + H(+). Its function is as follows. Specifically methylates the cytosine at position 1407 (m5C1407) of 16S rRNA. The chain is Ribosomal RNA small subunit methyltransferase F from Escherichia coli O157:H7 (strain EC4115 / EHEC).